Reading from the N-terminus, the 140-residue chain is Ribosome-binding factor A (140 aa).

The protein belongs to the RbfA family. In terms of assembly, monomer. Binds 30S ribosomal subunits, but not 50S ribosomal subunits or 70S ribosomes.

It localises to the cytoplasm. In terms of biological role, one of several proteins that assist in the late maturation steps of the functional core of the 30S ribosomal subunit. Associates with free 30S ribosomal subunits (but not with 30S subunits that are part of 70S ribosomes or polysomes). Required for efficient processing of 16S rRNA. May interact with the 5'-terminal helix region of 16S rRNA. This is Ribosome-binding factor A from Cereibacter sphaeroides (strain ATCC 17025 / ATH 2.4.3) (Rhodobacter sphaeroides).